The primary structure comprises 307 residues: Membrane protein insertase YidC 2 (307 aa).

A signal peptide spans 1-23 (MKLTLNRILFSGLALSILFTLTG). Residue cysteine 24 is the site of N-palmitoyl cysteine attachment. A lipid anchor (S-diacylglycerol cysteine) is attached at cysteine 24. A run of 5 helical transmembrane segments spans residues 58–78 (LGYG…ILPL), 135–155 (LGGI…AMYF), 179–199 (VLTA…MMAV), 209–225 (TMMY…SFSL), and 231–251 (LYWL…TYLL). Positions 263 to 307 (YAKTPPKAYQSTSSRKDVTPSQNMEQANLPKKIKSNRNAGKQRKR) are disordered. The segment covering 271–288 (YQSTSSRKDVTPSQNMEQ) has biased composition (polar residues). Residues 293–307 (KKIKSNRNAGKQRKR) are compositionally biased toward basic residues.

It belongs to the OXA1/ALB3/YidC family. Type 2 subfamily.

It is found in the cell membrane. In terms of biological role, required for the insertion and/or proper folding and/or complex formation of integral membrane proteins into the membrane. Involved in integration of membrane proteins that insert both dependently and independently of the Sec translocase complex, as well as at least some lipoproteins. The protein is Membrane protein insertase YidC 2 of Streptococcus pyogenes serotype M18 (strain MGAS8232).